A 431-amino-acid polypeptide reads, in one-letter code: tRNA-2-methylthio-N(6)-dimethylallyladenosine synthase (431 aa).

Positions 4-120 (RAVYIKTFGC…IENIIENQVS (117 aa)) constitute an MTTase N-terminal domain. [4Fe-4S] cluster-binding residues include Cys13, Cys49, Cys83, Cys154, Cys158, and Cys161. The 228-residue stretch at 140 to 367 (RKDCVKAWVN…LKLQDEITER (228 aa)) folds into the Radical SAM core domain. In terms of domain architecture, TRAM spans 370 to 430 (KRLEGKIQEV…RHSLEGDIIS (61 aa)).

It belongs to the methylthiotransferase family. MiaB subfamily. As to quaternary structure, monomer. [4Fe-4S] cluster serves as cofactor.

It localises to the cytoplasm. It carries out the reaction N(6)-dimethylallyladenosine(37) in tRNA + (sulfur carrier)-SH + AH2 + 2 S-adenosyl-L-methionine = 2-methylsulfanyl-N(6)-dimethylallyladenosine(37) in tRNA + (sulfur carrier)-H + 5'-deoxyadenosine + L-methionine + A + S-adenosyl-L-homocysteine + 2 H(+). Its function is as follows. Catalyzes the methylthiolation of N6-(dimethylallyl)adenosine (i(6)A), leading to the formation of 2-methylthio-N6-(dimethylallyl)adenosine (ms(2)i(6)A) at position 37 in tRNAs that read codons beginning with uridine. The chain is tRNA-2-methylthio-N(6)-dimethylallyladenosine synthase from Thermodesulfovibrio yellowstonii (strain ATCC 51303 / DSM 11347 / YP87).